Reading from the N-terminus, the 448-residue chain is Protein kinase C and casein kinase substrate in neurons protein 2 (448 aa).

One can recognise an F-BAR domain in the interval 11 to 282; that stretch reads VEVSSDSFWE…NIKTADAVED (272 aa). Positions 25-274 form a coiled coil; sequence KRTVKRIDDG…NIYRELEQNI (250 aa). Positions 315 to 386 are disordered; it reads SRREKKKASD…DTNPFDEDTS (72 aa). Over residues 329-358 the composition is skewed to polar residues; it reads TGINQTGDQVSQPNKHSSVSSYEKNQSYPT. The NPF1 signature appears at 367–369; it reads NPF. The short motif at 379–381 is the NPF2 element; that stretch reads NPF. The 61-residue stretch at 388-448 folds into the SH3 domain; the sequence is VMEVRVRALY…YPANYVEPIQ (61 aa).

The protein belongs to the PACSIN family. Phosphorylated on serine residues. Detected in intestine, cardiac muscle, lung and brain (at protein level). Expressed in all tissues tested, including, gizzard, liver, cardiac muscle, skeletal muscle and skin.

It is found in the cytoplasm. It localises to the cytoskeleton. The protein resides in the cytoplasmic vesicle membrane. Its subcellular location is the cell projection. The protein localises to the ruffle membrane. It is found in the early endosome. It localises to the recycling endosome membrane. The protein resides in the cell membrane. Its subcellular location is the membrane. The protein localises to the caveola. It is found in the cell junction. It localises to the focal adhesion. Functionally, regulates the morphogenesis and endocytosis of caveolae. Lipid-binding protein that is able to promote the tubulation of the phosphatidic acid-containing membranes it preferentially binds. Plays a role in intracellular vesicle-mediated transport. Involved in the endocytosis of cell-surface receptors like the EGF receptor, contributing to its internalization in the absence of EGF stimulus. Essential for endothelial organization in sprouting angiogenesis, modulates CDH5-based junctions. Facilitates endothelial front-rear polarity during migration by recruiting EHD4 and MICALL1 to asymmetric adherens junctions between leader and follower cells. The chain is Protein kinase C and casein kinase substrate in neurons protein 2 (PACSIN2) from Gallus gallus (Chicken).